The following is a 253-amino-acid chain: REF/SRPP-like protein Os05g0151300/LOC_Os05g05940 (253 aa).

A disordered region spans residues 1 to 26 (MADSGSDAPISNRPEEEVTVEKTPEM). The span at 13 to 26 (RPEEEVTVEKTPEM) shows a compositional bias: basic and acidic residues.

Belongs to the REF/SRPP family.

This Oryza sativa subsp. japonica (Rice) protein is REF/SRPP-like protein Os05g0151300/LOC_Os05g05940.